The sequence spans 108 residues: Large ribosomal subunit protein bL31B (108 aa).

The disordered stretch occupies residues 88–108 (AAVEEAPAVKSKKKAPIKKKK). A compositionally biased stretch (basic residues) spans 97–108 (KSKKKAPIKKKK).

This sequence belongs to the bacterial ribosomal protein bL31 family. Type B subfamily. Part of the 50S ribosomal subunit.

This chain is Large ribosomal subunit protein bL31B, found in Chlamydia abortus (strain DSM 27085 / S26/3) (Chlamydophila abortus).